Consider the following 109-residue polypeptide: MAKNSNPSAFDRDFGYLMPFLDRVAAAASDLEDASARAELTRLMVEEKARWQRIQELLGGAGGRGAAAPTPAREAPAEAPRLARGSADELHEAAPFATGLTVGSLRGSR.

E47 is a binding site for Fe cation. The interval 61 to 94 is disordered; the sequence is AGGRGAAAPTPAREAPAEAPRLARGSADELHEAA. The segment covering 66–85 has biased composition (low complexity); the sequence is AAAPTPAREAPAEAPRLARG. Residues 100–106 form a probable targeting peptide region; sequence LTVGSLR.

The protein resides in the encapsulin nanocompartment. In terms of biological role, cargo protein of a type 1 encapsulin nanocompartment. May help nucleate Fe atoms in the interior of the encapsulin nanocompartment. Present in about 47 copies/encapsulin nanocompartment. The sequence is that of Encapsulin nanocompartment cargo protein EncD from Myxococcus xanthus (strain DK1622).